The primary structure comprises 347 residues: Selenide, water dikinase (347 aa).

The active site involves U17. A non-standard amino acid (selenocysteine) is located at residue U17. Residues K20 and 48-50 (TAD) each bind ATP. D51 contacts Mg(2+). ATP-binding positions include D68, D91, and 139–141 (GHS). D91 is a Mg(2+) binding site. D227 is a Mg(2+) binding site.

Belongs to the selenophosphate synthase 1 family. Class I subfamily. Homodimer. Mg(2+) serves as cofactor.

The enzyme catalyses hydrogenselenide + ATP + H2O = selenophosphate + AMP + phosphate + 2 H(+). Its function is as follows. Synthesizes selenophosphate from selenide and ATP. The sequence is that of Selenide, water dikinase from Haemophilus influenzae (strain 86-028NP).